We begin with the raw amino-acid sequence, 461 residues long: MQKNEIKQIDMKPLIIDSSWTERFLPDPPREKDNRPPFRRDRGRILHSAAFRCLQAKTQIHSIGENDFYRTRLTHSLEVAQIGSSLVAQLKFLETFESLSQTLNIDKNELQKQLKPLLPSNDLIESLCFAHDIGHPPFGHGGETALNYMMAEQGGFEGNAQTFRILTKLEPYTENAGMNLTRRTLLGVVKYPALLDVASPQYAELNFSRNIDARFVRIHDWIPGKGIFRDDLKMFNWLLENLSENDRTLFCQFKKVRENPAESLHTRFKSLDCSIMELADDIAYGVHDLEDAIVTGMVNPHQWQAAHSALKQIPSAWLHENIDSISQRLFSDKHFERKQAIGALVNFFITNVRWKLTANFDEPLLRYNAELSPEVIVALGVFKKFVWDYVIRNVDTQRIEYKGQRMLTEMFQIFESDPERLLPRNTANRWRNAPEERKKRIICDYIAGMSDAHALRVYQQL.

The disordered stretch occupies residues 22 to 41; the sequence is ERFLPDPPREKDNRPPFRRD. Basic and acidic residues predominate over residues 24–41; the sequence is FLPDPPREKDNRPPFRRD. The 214-residue stretch at 72-285 folds into the HD domain; sequence RLTHSLEVAQ…MELADDIAYG (214 aa).

The protein belongs to the dGTPase family. Type 2 subfamily.

This is Deoxyguanosinetriphosphate triphosphohydrolase-like protein from Haemophilus influenzae (strain PittGG).